The following is a 570-amino-acid chain: Periplasmic trehalase (570 aa).

Positions 1-34 (MIPPEIRRSVLLQKAIKLALAGTLLTFASFSATA) are cleaved as a signal peptide. Substrate contacts are provided by residues arginine 159, 166–167 (WD), asparagine 203, 212–214 (RSQ), 284–286 (RPE), and glycine 317. Catalysis depends on proton donor/acceptor residues aspartate 319 and glutamate 503. Residue glutamate 518 coordinates substrate. The segment at 544–570 (KPCDSVPSTRPASLSATPTKTPSAATQ) is disordered. The segment covering 554-570 (PASLSATPTKTPSAATQ) has biased composition (low complexity).

It belongs to the glycosyl hydrolase 37 family. In terms of assembly, monomer.

The protein resides in the periplasm. It catalyses the reaction alpha,alpha-trehalose + H2O = alpha-D-glucose + beta-D-glucose. Provides the cells with the ability to utilize trehalose at high osmolarity by splitting it into glucose molecules that can subsequently be taken up by the phosphotransferase-mediated uptake system. This is Periplasmic trehalase from Salmonella newport (strain SL254).